We begin with the raw amino-acid sequence, 403 residues long: Tripartite motif-containing protein 59 (403 aa).

An RING-type zinc finger spans residues 10–60; the sequence is CPICYSIFEDPRVLPCSHTFCRNCLENVLQASGNFYIWRPLRIPLKCPNCR. A B box-type zinc finger spans residues 92–134; that stretch reads PDVVTCPEHYRQPLNVYCLLDKKLVCGHCLTIGQHHGHPIDDL. The Zn(2+) site is built by Cys-97, His-100, Cys-120, and His-126. Residues 163–246 are a coiled coil; the sequence is LIEKLEEQKC…TITTSLQDES (84 aa). The chain crosses the membrane as a helical span at residues 329–349; it reads ILNIAIVSLISVILMLILLFN.

Belongs to the TRIM/RBCC family. Interacts with ECSIT. Moderately expressed in the spleen, brain and heart and very highly expressed in the testis.

Its subcellular location is the endoplasmic reticulum membrane. It catalyses the reaction S-ubiquitinyl-[E2 ubiquitin-conjugating enzyme]-L-cysteine + [acceptor protein]-L-lysine = [E2 ubiquitin-conjugating enzyme]-L-cysteine + N(6)-ubiquitinyl-[acceptor protein]-L-lysine.. The protein operates within protein modification; protein ubiquitination. Its function is as follows. E3 ubiquitin ligase involved in different processes such as development and immune response. Serves as a negative regulator for innate immune signaling pathways by suppressing RLR-induced activation of IRF3/7 and NF-kappa-B via interaction with adapter ECSIT. Regulates autophagy through modulating both the transcription and the ubiquitination of BECN1. On the one hand, regulates the transcription of BECN1 through negatively modulating the NF-kappa-B pathway. On the other hand, regulates TRAF6-mediated 'Lys-63'-linked ubiquitination of BECN1, thus affecting the formation of the BECN1-PIK3C3 complex. In addition, mediates 'Lys-48'-linked ubiquitination of TRAF6 and thereby promotes TRAF6 proteasomal degradation. Also acts as a critical regulator for early embryo development from blastocyst stage to gastrula through modulating F-actin assembly and WASH1 'Lys-63'-linked ubiquitination. This chain is Tripartite motif-containing protein 59 (Trim59), found in Mus musculus (Mouse).